A 127-amino-acid polypeptide reads, in one-letter code: Fluoride-specific ion channel FluC (127 aa).

4 consecutive transmembrane segments (helical) span residues 4–24 (SLLVIAIGASLGAWLRWLLGM), 37–57 (TVVANMVGGYIIGLAIAFLAA), 68–88 (LIITGFCGGLTTFSTFSAETV), and 96–116 (LLWALGSISLHVVGSLAMTAA). 2 residues coordinate Na(+): Gly-75 and Thr-78.

This sequence belongs to the fluoride channel Fluc/FEX (TC 1.A.43) family.

The protein localises to the cell inner membrane. The enzyme catalyses fluoride(in) = fluoride(out). Na(+) is not transported, but it plays an essential structural role and its presence is essential for fluoride channel function. Functionally, fluoride-specific ion channel. Important for reducing fluoride concentration in the cell, thus reducing its toxicity. The sequence is that of Fluoride-specific ion channel FluC from Pseudomonas syringae pv. maculicola.